A 176-amino-acid polypeptide reads, in one-letter code: Variant surface antigen A (176 aa).

The first 29 residues, 1–29, serve as a signal peptide directing secretion; that stretch reads MKKSIFSKKLLVSFGSLVALAAIPLIAIS. Cys30 carries N-palmitoyl cysteine lipidation. Cys30 is lipidated: S-diacylglycerol cysteine. Residues 33 to 176 form a disordered region; that stretch reads TDNNSSQSQQ…TKTENTQHTS (144 aa). A compositionally biased stretch (low complexity) spans 35-121; sequence NNSSQSQQPG…GSNSESGMNS (87 aa). The stretch at 123-135 is repeat 1; sequence KTENTQQSEAPGT. A 2.5 X 13 AA repeats region spans residues 123-176; it reads KTENTQQSEAPGTNTGNKTTSESNSESGMNSEKTENTQQSEAPGTKTENTQHTS. Residues 126–142 are compositionally biased toward polar residues; sequence NTQQSEAPGTNTGNKTT. A compositionally biased stretch (low complexity) spans 143-153; it reads SESNSESGMNS. Repeat 2 spans residues 155 to 167; that stretch reads KTENTQQSEAPGT. The segment covering 158–176 has biased composition (polar residues); the sequence is NTQQSEAPGTKTENTQHTS. The 3; truncated repeat unit spans residues 168-176; the sequence is KTENTQHTS.

The protein localises to the cell membrane. Responsible for the antigenic diversity for host adaptation. The protein is Variant surface antigen A (vlpA) of Mesomycoplasma hyorhinis (Mycoplasma hyorhinis).